Reading from the N-terminus, the 809-residue chain is Carbon monoxide dehydrogenase large chain (809 aa).

Residue cysteine 388 participates in Cu(+) binding. A Mo-molybdopterin cytosine dinucleotide-binding site is contributed by glutamate 763.

As to quaternary structure, dimer of heterotrimers. Each heterotrimer consists of a large, a medium and a small subunit. The cofactor is Cu(+). Mo-molybdopterin cytosine dinucleotide serves as cofactor.

It carries out the reaction CO + a quinone + H2O = a quinol + CO2. Its function is as follows. Catalyzes the oxidation of carbon monoxide to carbon dioxide. This chain is Carbon monoxide dehydrogenase large chain (coxL), found in Afipia carboxidovorans (strain ATCC 49405 / DSM 1227 / KCTC 32145 / OM5) (Oligotropha carboxidovorans).